A 595-amino-acid chain; its full sequence is Phosphomethylpyrimidine synthase (595 aa).

The segment covering 97-120 (GRDVRPEDNGFTKDDDPRAAREVF) has biased composition (basic and acidic residues). Residues 97-134 (GRDVRPEDNGFTKDDDPRAAREVFPRTSSHKPLRAKKG) form a disordered region. Residues 124 to 133 (SSHKPLRAKK) are compositionally biased toward basic residues. Substrate-binding positions include N202, M231, Y260, H296, 316–318 (SRG), 357–360 (DGLR), and E396. Residue H400 participates in Zn(2+) binding. Y423 lines the substrate pocket. A Zn(2+)-binding site is contributed by H464. Positions 544, 547, and 552 each coordinate [4Fe-4S] cluster.

This sequence belongs to the ThiC family. It depends on [4Fe-4S] cluster as a cofactor.

It catalyses the reaction 5-amino-1-(5-phospho-beta-D-ribosyl)imidazole + S-adenosyl-L-methionine = 4-amino-2-methyl-5-(phosphooxymethyl)pyrimidine + CO + 5'-deoxyadenosine + formate + L-methionine + 3 H(+). The protein operates within cofactor biosynthesis; thiamine diphosphate biosynthesis. Its function is as follows. Catalyzes the synthesis of the hydroxymethylpyrimidine phosphate (HMP-P) moiety of thiamine from aminoimidazole ribotide (AIR) in a radical S-adenosyl-L-methionine (SAM)-dependent reaction. This Halalkalibacterium halodurans (strain ATCC BAA-125 / DSM 18197 / FERM 7344 / JCM 9153 / C-125) (Bacillus halodurans) protein is Phosphomethylpyrimidine synthase.